Here is a 474-residue protein sequence, read N- to C-terminus: 3-isopropylmalate dehydratase large subunit (474 aa).

[4Fe-4S] cluster contacts are provided by C352, C413, and C416.

The protein belongs to the aconitase/IPM isomerase family. LeuC type 1 subfamily. Heterodimer of LeuC and LeuD. It depends on [4Fe-4S] cluster as a cofactor.

It carries out the reaction (2R,3S)-3-isopropylmalate = (2S)-2-isopropylmalate. Its pathway is amino-acid biosynthesis; L-leucine biosynthesis; L-leucine from 3-methyl-2-oxobutanoate: step 2/4. Catalyzes the isomerization between 2-isopropylmalate and 3-isopropylmalate, via the formation of 2-isopropylmaleate. This Pseudomonas savastanoi pv. phaseolicola (strain 1448A / Race 6) (Pseudomonas syringae pv. phaseolicola (strain 1448A / Race 6)) protein is 3-isopropylmalate dehydratase large subunit.